We begin with the raw amino-acid sequence, 126 residues long: S-adenosylmethionine decarboxylase proenzyme (126 aa).

The Schiff-base intermediate with substrate; via pyruvic acid role is filled by Ser-63. Ser-63 is subject to Pyruvic acid (Ser); by autocatalysis. His-68 serves as the catalytic Proton acceptor; for processing activity. The active-site Proton donor; for catalytic activity is the Cys-83.

The protein belongs to the prokaryotic AdoMetDC family. Type 1 subfamily. Heterotetramer of two alpha and two beta chains arranged as a dimer of alpha/beta heterodimers. It depends on pyruvate as a cofactor. Post-translationally, is synthesized initially as an inactive proenzyme. Formation of the active enzyme involves a self-maturation process in which the active site pyruvoyl group is generated from an internal serine residue via an autocatalytic post-translational modification. Two non-identical subunits are generated from the proenzyme in this reaction, and the pyruvate is formed at the N-terminus of the alpha chain, which is derived from the carboxyl end of the proenzyme. The post-translation cleavage follows an unusual pathway, termed non-hydrolytic serinolysis, in which the side chain hydroxyl group of the serine supplies its oxygen atom to form the C-terminus of the beta chain, while the remainder of the serine residue undergoes an oxidative deamination to produce ammonia and the pyruvoyl group blocking the N-terminus of the alpha chain.

It carries out the reaction S-adenosyl-L-methionine + H(+) = S-adenosyl 3-(methylsulfanyl)propylamine + CO2. It participates in amine and polyamine biosynthesis; S-adenosylmethioninamine biosynthesis; S-adenosylmethioninamine from S-adenosyl-L-methionine: step 1/1. Functionally, catalyzes the decarboxylation of S-adenosylmethionine to S-adenosylmethioninamine (dcAdoMet), the propylamine donor required for the synthesis of the polyamines spermine and spermidine from the diamine putrescine. The polypeptide is S-adenosylmethionine decarboxylase proenzyme (Clostridium tetani (strain Massachusetts / E88)).